The following is a 179-amino-acid chain: Large ribosomal subunit protein uL5 (179 aa).

It belongs to the universal ribosomal protein uL5 family. Part of the 50S ribosomal subunit; part of the 5S rRNA/L5/L18/L25 subcomplex. Contacts the 5S rRNA and the P site tRNA. Forms a bridge to the 30S subunit in the 70S ribosome.

Its function is as follows. This is one of the proteins that bind and probably mediate the attachment of the 5S RNA into the large ribosomal subunit, where it forms part of the central protuberance. In the 70S ribosome it contacts protein S13 of the 30S subunit (bridge B1b), connecting the 2 subunits; this bridge is implicated in subunit movement. Contacts the P site tRNA; the 5S rRNA and some of its associated proteins might help stabilize positioning of ribosome-bound tRNAs. The protein is Large ribosomal subunit protein uL5 of Rickettsia rickettsii (strain Iowa).